A 345-amino-acid chain; its full sequence is S-adenosylmethionine:tRNA ribosyltransferase-isomerase (345 aa).

The protein belongs to the QueA family. Monomer.

The protein localises to the cytoplasm. The catalysed reaction is 7-aminomethyl-7-carbaguanosine(34) in tRNA + S-adenosyl-L-methionine = epoxyqueuosine(34) in tRNA + adenine + L-methionine + 2 H(+). Its pathway is tRNA modification; tRNA-queuosine biosynthesis. In terms of biological role, transfers and isomerizes the ribose moiety from AdoMet to the 7-aminomethyl group of 7-deazaguanine (preQ1-tRNA) to give epoxyqueuosine (oQ-tRNA). In Aromatoleum aromaticum (strain DSM 19018 / LMG 30748 / EbN1) (Azoarcus sp. (strain EbN1)), this protein is S-adenosylmethionine:tRNA ribosyltransferase-isomerase.